Reading from the N-terminus, the 50-residue chain is Large ribosomal subunit protein bL33B (50 aa).

The protein belongs to the bacterial ribosomal protein bL33 family.

The sequence is that of Large ribosomal subunit protein bL33B from Mycoplasmopsis agalactiae (strain NCTC 10123 / CIP 59.7 / PG2) (Mycoplasma agalactiae).